Here is a 430-residue protein sequence, read N- to C-terminus: Glutamate-1-semialdehyde 2,1-aminomutase (430 aa).

Lys-268 bears the N6-(pyridoxal phosphate)lysine mark.

It belongs to the class-III pyridoxal-phosphate-dependent aminotransferase family. HemL subfamily. Requires pyridoxal 5'-phosphate as cofactor.

It localises to the cytoplasm. The enzyme catalyses (S)-4-amino-5-oxopentanoate = 5-aminolevulinate. It functions in the pathway porphyrin-containing compound metabolism; protoporphyrin-IX biosynthesis; 5-aminolevulinate from L-glutamyl-tRNA(Glu): step 2/2. The sequence is that of Glutamate-1-semialdehyde 2,1-aminomutase from Methanopyrus kandleri (strain AV19 / DSM 6324 / JCM 9639 / NBRC 100938).